The sequence spans 285 residues: tRNA pseudouridine synthase B (285 aa).

Asp38 (nucleophile) is an active-site residue.

Belongs to the pseudouridine synthase TruB family. Type 1 subfamily.

The catalysed reaction is uridine(55) in tRNA = pseudouridine(55) in tRNA. In terms of biological role, responsible for synthesis of pseudouridine from uracil-55 in the psi GC loop of transfer RNAs. This Geobacillus kaustophilus (strain HTA426) protein is tRNA pseudouridine synthase B.